A 469-amino-acid chain; its full sequence is Keratin, type I cytoskeletal 26 (469 aa).

Residues 1–82 (MSFRLSSGSR…ENEHGLLPGN (82 aa)) form a head region. Residues 83-118 (EKVTLQNLNDRLASYLDHVCTLEEANADLEQKIKGW) are coil 1A. In terms of domain architecture, IF rod spans 83–398 (EKVTLQNLND…KLIDGEGRKS (316 aa)). Residues 119 to 140 (YEKYGPGSGRQLAYDCSKYFSV) are linker 1. A coil 1B region spans residues 141–232 (TEDLKRQIIS…KNHQEEMKVM (92 aa)). The interval 233-255 (QGAAGGNVNVEINAAPGVDLTVL) is linker 12. A coil 2 region spans residues 256–394 (LNNMRAEYED…EMYCKLIDGE (139 aa)). The tract at residues 395-465 (GRKSKSTYCK…NITMEQRLPS (71 aa)) is tail. Disordered regions lie at residues 398–421 (SKSTYCKSEGRGPKNSENQVKDSK) and 450–469 (KSSKISNITMEQRLPSKVPQ). The span at 405–421 (SEGRGPKNSENQVKDSK) shows a compositional bias: basic and acidic residues.

It belongs to the intermediate filament family. In terms of assembly, heterotetramer of two type I and two type II keratins.

This Bos taurus (Bovine) protein is Keratin, type I cytoskeletal 26.